A 48-amino-acid polypeptide reads, in one-letter code: uncharacterized protein (48 aa).

This is an uncharacterized protein from His1 virus (isolate Australia/Victoria) (His1V).